We begin with the raw amino-acid sequence, 359 residues long: Type-1 angiotensin II receptor (359 aa).

Topologically, residues 1–25 are extracellular; it reads MILNSSTEDGIKRIQDDCPKAGRHN. N-linked (GlcNAc...) asparagine glycosylation is present at asparagine 4. The angiotensin II site is built by glutamine 15 and aspartate 17. 2 disulfide bridges follow: cysteine 18–cysteine 274 and cysteine 101–cysteine 180. A helical transmembrane segment spans residues 26-55; sequence YIFVMIPTLYSIIFVVGIFGNSLVVIVIYF. Over 56–61 the chain is Cytoplasmic; that stretch reads YMKLKT. The chain crosses the membrane as a helical span at residues 62 to 89; it reads VASVFLLNLALADLCFLLTLPLWAVYTA. The Extracellular segment spans residues 90–98; that stretch reads MEYRWPFGN. The helical transmembrane segment at 99–125 threads the bilayer; it reads YLCKIASASVSFNLYASVFLLTCLSID. Residues 126 to 141 lie on the Cytoplasmic side of the membrane; the sequence is RYVAIVHPMKSPVRRT. A helical transmembrane segment spans residues 142–165; that stretch reads MLMAKVTCIIIWLLAGLASLPTII. Topologically, residues 166–190 are extracellular; it reads HRNVFFIENTNITVCAFHYESQNST. Residue arginine 167 participates in angiotensin II binding. Asparagine 176 carries an N-linked (GlcNAc...) asparagine glycan. Angiotensin II is bound by residues phenylalanine 182, histidine 183, and tyrosine 184. An N-linked (GlcNAc...) asparagine glycan is attached at asparagine 188. A helical membrane pass occupies residues 191-216; that stretch reads LPIGLGLTKNILGFLFPFLIILTSYT. Lysine 199 is a binding site for angiotensin II. At 217 to 239 the chain is on the cytoplasmic side; the sequence is LIWKTLKRAYEIQKNKPRNDDIF. A helical transmembrane segment spans residues 240–268; it reads KIIMAIVLFFFFSWVPHQIFTFLDVLIQL. Residues 269–278 are Extracellular-facing; that stretch reads GIIHDCKIAD. The chain crosses the membrane as a helical span at residues 279–304; that stretch reads IVDTAMPITICIAYFNNCLNPLFYGF. At 305–359 the chain is on the cytoplasmic side; sequence LGKKFKKYFLQLLKYIPPKAKSHSSLSTKMSTLSYRPSDHGNASTKKSASCVEVE. Positions 335-352 are enriched in polar residues; that stretch reads STLSYRPSDHGNASTKKS. Positions 335–359 are disordered; it reads STLSYRPSDHGNASTKKSASCVEVE. A lipid anchor (S-palmitoyl cysteine) is attached at cysteine 355.

It belongs to the G-protein coupled receptor 1 family. Interacts with MAS1. Interacts with ARRB1. Interacts with FLNA (via filamin repeat 21); increases PKA-mediated phosphorylation of FLNA. C-terminal Ser or Thr residues may be phosphorylated. In terms of tissue distribution, adrenal, liver, aorta, kidney, lung, testis and heart.

It localises to the cell membrane. Receptor for angiotensin II, a vasoconstricting peptide, which acts as a key regulator of blood pressure and sodium retention by the kidney. The activated receptor in turn couples to G-alpha proteins G(q) (GNAQ, GNA11, GNA14 or GNA15) and thus activates phospholipase C and increases the cytosolic Ca(2+) concentrations, which in turn triggers cellular responses such as stimulation of protein kinase C. The chain is Type-1 angiotensin II receptor (AGTR1) from Canis lupus familiaris (Dog).